We begin with the raw amino-acid sequence, 501 residues long: Aldehyde dehydrogenase 1A1 (501 aa).

N-acetylserine is present on S2. Residues K91 and K128 each carry the N6-acetyllysine modification. Residues 167–170, 193–196, 226–227, and 246–247 each bind NAD(+); these read LPWN, KPAE, GP, and GS. At K252 the chain carries N6-acetyllysine. E269 (proton acceptor) is an active-site residue. Residue 269 to 271 participates in NAD(+) binding; it reads ELG. Residue C303 is the Nucleophile of the active site. Residues 336–501 are mediates interaction with PRMT3; sequence LTPGVSQGPQ…VTVKISQKNS (166 aa). T337 carries the post-translational modification Phosphothreonine. 349–353 lines the NAD(+) pocket; that stretch reads EQYDK. 2 positions are modified to N6-acetyllysine: K353 and K367. Residue 400–402 participates in NAD(+) binding; that stretch reads EIF. At K410 the chain carries N6-acetyllysine. S413 carries the phosphoserine modification. N6-acetyllysine occurs at positions 419, 435, and 495.

It belongs to the aldehyde dehydrogenase family. As to quaternary structure, homotetramer. Interacts with PRMT3; the interaction is direct, inhibits ALDH1A1 aldehyde dehydrogenase activity and is independent of the methyltransferase activity of PRMT3. Post-translationally, the N-terminus is blocked most probably by acetylation.

The protein localises to the cytoplasm. It is found in the cytosol. The protein resides in the cell projection. It localises to the axon. It carries out the reaction an aldehyde + NAD(+) + H2O = a carboxylate + NADH + 2 H(+). It catalyses the reaction all-trans-retinal + NAD(+) + H2O = all-trans-retinoate + NADH + 2 H(+). The enzyme catalyses 9-cis-retinal + NAD(+) + H2O = 9-cis-retinoate + NADH + 2 H(+). The catalysed reaction is 11-cis-retinal + NAD(+) + H2O = 11-cis-retinoate + NADH + 2 H(+). It carries out the reaction 13-cis-retinal + NAD(+) + H2O = 13-cis-retinoate + NADH + 2 H(+). It catalyses the reaction 3-deoxyglucosone + NAD(+) + H2O = 2-dehydro-3-deoxy-D-gluconate + NADH + 2 H(+). The enzyme catalyses (E)-4-hydroxynon-2-enal + NAD(+) + H2O = (E)-4-hydroxynon-2-enoate + NADH + 2 H(+). The catalysed reaction is malonaldehyde + NAD(+) + H2O = 3-oxopropanoate + NADH + 2 H(+). It carries out the reaction hexanal + NAD(+) + H2O = hexanoate + NADH + 2 H(+). It catalyses the reaction propanal + NAD(+) + H2O = propanoate + NADH + 2 H(+). The enzyme catalyses acetaldehyde + NAD(+) + H2O = acetate + NADH + 2 H(+). The catalysed reaction is benzaldehyde + NAD(+) + H2O = benzoate + NADH + 2 H(+). It carries out the reaction 4-aminobutanal + NAD(+) + H2O = 4-aminobutanoate + NADH + 2 H(+). The protein operates within cofactor metabolism; retinol metabolism. Functionally, cytosolic dehydrogenase that catalyzes the irreversible oxidation of a wide range of aldehydes to their corresponding carboxylic acid. Functions downstream of retinol dehydrogenases and catalyzes the oxidation of retinaldehyde into retinoic acid, the second step in the oxidation of retinol/vitamin A into retinoic acid. This pathway is crucial to control the levels of retinol and retinoic acid, two important molecules which excess can be teratogenic and cytotoxic. Also oxidizes aldehydes resulting from lipid peroxidation like (E)-4-hydroxynon-2-enal/HNE, malonaldehyde and hexanal that form protein adducts and are highly cytotoxic. By participating for instance to the clearance of (E)-4-hydroxynon-2-enal/HNE in the lens epithelium prevents the formation of HNE-protein adducts and lens opacification. Also functions downstream of fructosamine-3-kinase in the fructosamine degradation pathway by catalyzing the oxidation of 3-deoxyglucosone, the carbohydrate product of fructosamine 3-phosphate decomposition, which is itself a potent glycating agent that may react with lysine and arginine side-chains of proteins. Also has an aminobutyraldehyde dehydrogenase activity and is probably part of an alternative pathway for the biosynthesis of GABA/4-aminobutanoate in midbrain, thereby playing a role in GABAergic synaptic transmission. This Equus caballus (Horse) protein is Aldehyde dehydrogenase 1A1.